The chain runs to 38 residues: Photosystem II reaction center protein L (38 aa).

The chain crosses the membrane as a helical span at residues 17–37; the sequence is SLYWGLLLIFVLAVLFSSYIF.

It belongs to the PsbL family. PSII is composed of 1 copy each of membrane proteins PsbA, PsbB, PsbC, PsbD, PsbE, PsbF, PsbH, PsbI, PsbJ, PsbK, PsbL, PsbM, PsbT, PsbX, PsbY, PsbZ, Psb30/Ycf12, at least 3 peripheral proteins of the oxygen-evolving complex and a large number of cofactors. It forms dimeric complexes.

It localises to the plastid. It is found in the chloroplast thylakoid membrane. In terms of biological role, one of the components of the core complex of photosystem II (PSII). PSII is a light-driven water:plastoquinone oxidoreductase that uses light energy to abstract electrons from H(2)O, generating O(2) and a proton gradient subsequently used for ATP formation. It consists of a core antenna complex that captures photons, and an electron transfer chain that converts photonic excitation into a charge separation. This subunit is found at the monomer-monomer interface and is required for correct PSII assembly and/or dimerization. This is Photosystem II reaction center protein L from Ostreococcus tauri.